The following is a 1010-amino-acid chain: Probable LRR receptor-like serine/threonine-protein kinase At3g47570 (1010 aa).

The first 19 residues, 1-19 (MRLFLLLAFNALMLLETHG), serve as a signal peptide directing secretion. Over 20–645 (FTDETDRQAL…SSRLKKVVIG (626 aa)) the chain is Extracellular. N-linked (GlcNAc...) asparagine glycosylation is found at asparagine 48 and asparagine 88. LRR repeat units follow at residues 89-113 (LSFL…VGQL), 114-137 (SRLE…LYNC), 139-161 (RLLN…LGSL), 162-185 (TNLV…LGNL), 186-209 (TLLE…VAQL), 211-233 (QIWS…LYNL), 234-258 (SSLK…GILL), 259-282 (PNLL…LSNI), 283-307 (STLE…NVPN), and 310-333 (LLFL…TSLT). Residue asparagine 136 is glycosylated (N-linked (GlcNAc...) asparagine). N-linked (GlcNAc...) asparagine glycosylation is present at asparagine 184. 2 N-linked (GlcNAc...) asparagine glycosylation sites follow: asparagine 221 and asparagine 232. Residues asparagine 281 and asparagine 294 are each glycosylated (N-linked (GlcNAc...) asparagine). N-linked (GlcNAc...) asparagine glycans are attached at residues asparagine 334 and asparagine 358. LRR repeat units follow at residues 335–359 (CTQL…IANL), 361–384 (AKLV…IGNL), 385–408 (INLQ…LGKL), 410–432 (NLRY…IGNM), 433–455 (TMLE…SLGN), 457–480 (SHLL…IMKI), 481–504 (QQLL…IGAL), 505–528 (QNLG…LGNC), 530–551 (TMES…LKGL), 552–574 (VGVK…YFAS), and 575–600 (FSKL…IFEN). N-linked (GlcNAc...) asparagine glycosylation is found at asparagine 431, asparagine 455, and asparagine 470. Asparagine 582 and asparagine 600 each carry an N-linked (GlcNAc...) asparagine glycan. The chain crosses the membrane as a helical span at residues 646–666 (VSVGITLLLLLFMASVTLIWL). Residues 667-1010 (RKRKKNKETN…FFKASRTTWR (344 aa)) lie on the Cytoplasmic side of the membrane. Threonine 699 carries the phosphothreonine modification. Residues 702–1002 (FSSSNMVGSG…ELISIRERFF (301 aa)) enclose the Protein kinase domain. ATP contacts are provided by residues 708–716 (VGSGSFGTV) and lysine 731. Phosphotyrosine is present on residues tyrosine 781 and tyrosine 826. The active-site Proton acceptor is the aspartate 839. Residue tyrosine 887 is modified to Phosphotyrosine.

The protein belongs to the protein kinase superfamily. Ser/Thr protein kinase family.

The protein localises to the cell membrane. It carries out the reaction L-seryl-[protein] + ATP = O-phospho-L-seryl-[protein] + ADP + H(+). It catalyses the reaction L-threonyl-[protein] + ATP = O-phospho-L-threonyl-[protein] + ADP + H(+). The chain is Probable LRR receptor-like serine/threonine-protein kinase At3g47570 from Arabidopsis thaliana (Mouse-ear cress).